The chain runs to 363 residues: MDNFLPFPSSNANSVQELSMDPNNNRSHFTTVPTYDHHQAQPHHFLPPFSYPVEQMAAVMNPQPVYLSECYPQIPVTQTGSEFGSLVGNPCLWQERGGFLDPRMTKMARINRKNAMMRSRNNSSPNSSPSELVDSKRQLMMLNLKNNVQISDKKDSYQQSTFDNKKLRVLCEKELKNSDVGSLGRIVLPKRDAEANLPKLSDKEGIVVQMRDVFSMQSWSFKYKFWSNNKSRMYVLENTGEFVKQNGAEIGDFLTIYEDESKNLYFAMNGNSGKQNEGRENESRERNHYEEAMLDYIPRDEEEASIAMLIGNLNDHYPIPNDLMDLTTDLQHHQATSSSMPPEDHAYVGSSDDQVSFNDFEWW.

Positions 1–27 (MDNFLPFPSSNANSVQELSMDPNNNRS) are disordered. Polar residues predominate over residues 8–27 (PSSNANSVQELSMDPNNNRS). A DNA-binding region (TF-B3) is located at residues 171–272 (CEKELKNSDV…NLYFAMNGNS (102 aa)). The segment at 331 to 351 (QHHQATSSSMPPEDHAYVGSS) is disordered.

Its subcellular location is the nucleus. Transcription regulator that plays a central role in embryo development. Required for the maintenance of suspensor morphology, specification of cotyledon identity, progression through the maturation phase and suppression of premature germination. Ectopic expression is sufficient to promote somatic embryogenesis. The sequence is that of B3 domain-containing transcription factor LEC2 (LEC2) from Arabidopsis thaliana (Mouse-ear cress).